The primary structure comprises 557 residues: Leucine-rich glioma-inactivated protein 1 (557 aa).

Positions 1–34 are cleaved as a signal peptide; the sequence is MESERSKRMGNACIPLKRIAYFLCLLSALLLTEG. In terms of domain architecture, LRRNT spans 35 to 72; sequence KKPAKPKCPAVCTCTKDNALCENARSIPRTVPPDVISL. 3 LRR repeats span residues 92-113, 116-137, and 140-161; these read SLQLLLFTSNSFDVISDDAFIG, HLEYLFIENNNIKSISRHTFRG, and SLIHLSLANNNLQTLPKDIFKG. Positions 173–223 constitute an LRRCT domain; sequence NSFNCDCKLKWLVEWLGHTNATVEDIYCEGPPEYKKRKINSLSSKDFDCII. N-linked (GlcNAc...) asparagine glycosylation occurs at Asn-192. EAR repeat units lie at residues 225–267, 271–313, 317–364, 366–415, 419–462, 464–506, and 510–552; these read EFAK…EWDH, TFRN…KRDS, KFIK…KWNG, GFYS…QWNK, LFTN…KWGG, SFQD…NWDA, and KFVK…KHVI. The N-linked (GlcNAc...) asparagine glycan is linked to Asn-277. Asn-422 carries an N-linked (GlcNAc...) asparagine glycan.

In terms of assembly, oligomer. Interacts with KCNA1 within a complex containing KCNA1, KCNA4 and KCNAB1. Part of a complex containing ADAM22, DLG4/PSD95 and CACNG2 (stargazin). Can bind to ADAM11 and ADAM23. Glycosylated.

Its subcellular location is the secreted. The protein localises to the synapse. It is found in the cytoplasm. In terms of biological role, regulates voltage-gated potassium channels assembled from KCNA1, KCNA4 and KCNAB1. It slows down channel inactivation by precluding channel closure mediated by the KCNAB1 subunit. Ligand for ADAM22 that positively regulates synaptic transmission mediated by AMPA-type glutamate receptors. Plays a role in suppressing the production of MMP1/3 through the phosphatidylinositol 3-kinase/ERK pathway. The chain is Leucine-rich glioma-inactivated protein 1 (LGI1) from Pongo abelii (Sumatran orangutan).